The following is a 403-amino-acid chain: MTQKKKVVLAYSGGLDTSVAIKWLQEQGYDVVACCLDVGEGKDLAFVQQKALQVGASNSYVIDAKEEFAKEFALTALQAHTLYEGKYPLVSALSRPLIAKKLVEVAEKENAQAVAHGCTGKGNDQVRFEVSIKSLNPDLEVLAPVREWKWSRDEEIAYAEKHGIPIPINLDSPYSIDQNLWGRSNECGVLEDPWAAPPEGAYDLTKPLEKTPDTPDVIEIAFEEGVPVSIDGTHYPLSDLILKLNELAGAHGVGRIDHVENRLVGIKSREVYECPGAMTLIKAHKELEDLTLVKEVAHFKPIIEQKMAEVIYNGLWFSPLKDALSGFLKETQKHVTGVVRVKLFKGHAIVEGRKSEYSLYDEKLATYTKDDAFDHHAAVGFIELWGLPTKVNSIVQKKEQIKA.

10-18 (AYSGGLDTS) is an ATP binding site. Tyrosine 87 provides a ligand contact to L-citrulline. Residue glycine 117 participates in ATP binding. Threonine 119, asparagine 123, and aspartate 124 together coordinate L-aspartate. L-citrulline is bound at residue asparagine 123. L-citrulline contacts are provided by arginine 127, serine 175, serine 184, glutamate 260, and tyrosine 272.

Belongs to the argininosuccinate synthase family. Type 1 subfamily. In terms of assembly, homotetramer.

The protein localises to the cytoplasm. It catalyses the reaction L-citrulline + L-aspartate + ATP = 2-(N(omega)-L-arginino)succinate + AMP + diphosphate + H(+). Its pathway is amino-acid biosynthesis; L-arginine biosynthesis; L-arginine from L-ornithine and carbamoyl phosphate: step 2/3. The chain is Argininosuccinate synthase from Bacillus licheniformis (strain ATCC 14580 / DSM 13 / JCM 2505 / CCUG 7422 / NBRC 12200 / NCIMB 9375 / NCTC 10341 / NRRL NRS-1264 / Gibson 46).